We begin with the raw amino-acid sequence, 217 residues long: Oxygen-insensitive NAD(P)H nitroreductase (217 aa).

10-14 contacts FMN; the sequence is RHSTK. NAD(+) is bound by residues lysine 14, threonine 41, threonine 67, asparagine 71, lysine 74, and arginine 107. Asparagine 71 provides a ligand contact to FMN. FMN contacts are provided by residues 165-166 and 205-207; these read EG and KSR.

This sequence belongs to the nitroreductase family. As to quaternary structure, homodimer. The cofactor is FMN.

Its function is as follows. Reduction of a variety of nitroaromatic compounds using NADH (and to lesser extent NADPH) as source of reducing equivalents; two electrons are transferred. The polypeptide is Oxygen-insensitive NAD(P)H nitroreductase (Enterobacter cloacae).